Here is a 61-residue protein sequence, read N- to C-terminus: Large ribosomal subunit protein bL32 (61 aa).

Belongs to the bacterial ribosomal protein bL32 family.

This chain is Large ribosomal subunit protein bL32, found in Hyphomonas neptunium (strain ATCC 15444).